The sequence spans 693 residues: Glycine--tRNA ligase beta subunit (693 aa).

Belongs to the class-II aminoacyl-tRNA synthetase family. Tetramer of two alpha and two beta subunits.

Its subcellular location is the cytoplasm. The catalysed reaction is tRNA(Gly) + glycine + ATP = glycyl-tRNA(Gly) + AMP + diphosphate. This Natranaerobius thermophilus (strain ATCC BAA-1301 / DSM 18059 / JW/NM-WN-LF) protein is Glycine--tRNA ligase beta subunit.